A 99-amino-acid polypeptide reads, in one-letter code: Large ribosomal subunit protein bL27 (99 aa).

Positions 13-65 (AHHKGGGSTTNGRNSAGRRLGAKRADGQEVHAGSIIYRQRGTKIHPGKNVGRG) are disordered.

It belongs to the bacterial ribosomal protein bL27 family.

This Lactobacillus delbrueckii subsp. bulgaricus (strain ATCC BAA-365 / Lb-18) protein is Large ribosomal subunit protein bL27.